Consider the following 200-residue polypeptide: Large ribosomal subunit protein uL4 (200 aa).

The segment at 42–65 is disordered; that stretch reads TRAQKTRSEVSGGGAKPWRQKGTG.

This sequence belongs to the universal ribosomal protein uL4 family. As to quaternary structure, part of the 50S ribosomal subunit.

Functionally, one of the primary rRNA binding proteins, this protein initially binds near the 5'-end of the 23S rRNA. It is important during the early stages of 50S assembly. It makes multiple contacts with different domains of the 23S rRNA in the assembled 50S subunit and ribosome. Forms part of the polypeptide exit tunnel. The sequence is that of Large ribosomal subunit protein uL4 from Vibrio campbellii (strain ATCC BAA-1116).